The sequence spans 339 residues: DNA-directed RNA polymerase subunit alpha (339 aa).

An alpha N-terminal domain (alpha-NTD) region spans residues 1–235; sequence MVIQRNWQSL…DQLQLFINFE (235 aa). An alpha C-terminal domain (alpha-CTD) region spans residues 251–339; sequence FNRNLLRKVD…DLAKRLEEPF (89 aa).

It belongs to the RNA polymerase alpha chain family. In terms of assembly, homodimer. The RNAP catalytic core consists of 2 alpha, 1 beta, 1 beta' and 1 omega subunit. When a sigma factor is associated with the core the holoenzyme is formed, which can initiate transcription.

It carries out the reaction RNA(n) + a ribonucleoside 5'-triphosphate = RNA(n+1) + diphosphate. In terms of biological role, DNA-dependent RNA polymerase catalyzes the transcription of DNA into RNA using the four ribonucleoside triphosphates as substrates. This chain is DNA-directed RNA polymerase subunit alpha, found in Granulibacter bethesdensis (strain ATCC BAA-1260 / CGDNIH1).